A 65-amino-acid polypeptide reads, in one-letter code: Large ribosomal subunit protein bL33c (65 aa).

Belongs to the bacterial ribosomal protein bL33 family.

It localises to the plastid. Its subcellular location is the chloroplast. The protein is Large ribosomal subunit protein bL33c of Chara vulgaris (Common stonewort).